Here is a 253-residue protein sequence, read N- to C-terminus: LexA repressor (253 aa).

The H-T-H motif DNA-binding region spans 26 to 46 (FDEMKDALNLRSKSGIHRLIS). A disordered region spans residues 73–97 (MPAATGKPPLAESGPPPVTAPATDE). Residues S174 and K212 each act as for autocatalytic cleavage activity in the active site.

Belongs to the peptidase S24 family. In terms of assembly, homodimer.

The enzyme catalyses Hydrolysis of Ala-|-Gly bond in repressor LexA.. Represses a number of genes involved in the response to DNA damage (SOS response), including recA and lexA. In the presence of single-stranded DNA, RecA interacts with LexA causing an autocatalytic cleavage which disrupts the DNA-binding part of LexA, leading to derepression of the SOS regulon and eventually DNA repair. This chain is LexA repressor, found in Gluconacetobacter diazotrophicus (strain ATCC 49037 / DSM 5601 / CCUG 37298 / CIP 103539 / LMG 7603 / PAl5).